Here is a 263-residue protein sequence, read N- to C-terminus: Putative SNAP25 homologous protein SNAP30 (263 aa).

2 disordered regions span residues 1–61 (MFGF…LQSQ) and 132–209 (NLGG…DGLS). Polar residues-rich tracts occupy residues 8–34 (PGNN…TSSE) and 52–61 (FNDSGGLQSQ). Basic and acidic residues predominate over residues 158 to 173 (KPSKKSENHKEEREKL). The span at 180-194 (RSSSQPALDQPTNAL) shows a compositional bias: polar residues. Basic and acidic residues predominate over residues 197–206 (VEQEKAKQDD). The 63-residue stretch at 198-260 (EQEKAKQDDG…QGANQRARHL (63 aa)) folds into the t-SNARE coiled-coil homology domain.

The protein belongs to the SNAP-25 family.

The protein resides in the membrane. It is found in the cytoplasm. In terms of biological role, vesicle trafficking protein that functions in the secretory pathway. This is Putative SNAP25 homologous protein SNAP30 (SNAP30) from Arabidopsis thaliana (Mouse-ear cress).